Reading from the N-terminus, the 763-residue chain is Endothelin-converting enzyme 2 (763 aa).

The Cytoplasmic portion of the chain corresponds to Met1–Glu60. A Phosphoserine modification is found at Ser27. Residues Leu61 to Leu81 traverse the membrane as a helical; Signal-anchor for type II membrane protein segment. At Trp82–Trp763 the chain is on the lumenal side. The 673-residue stretch at Thr91–Trp763 folds into the Peptidase M13 domain. Disulfide bonds link Cys92/Cys97, Cys115/Cys748, Cys123/Cys708, Cys179/Cys428, and Cys637/Cys760. N-linked (GlcNAc...) asparagine glycosylation is found at Asn159, Asn163, Asn204, Asn264, Asn309, Asn376, and Asn532. Position 600 (His600) interacts with Zn(2+). Glu601 is a catalytic residue. His604 serves as a coordination point for Zn(2+). N-linked (GlcNAc...) asparagine glycosylation is found at Asn625 and Asn633. Position 660 (Glu660) interacts with Zn(2+). The active-site Proton donor is the Asp664.

It belongs to the peptidase M13 family. It depends on Zn(2+) as a cofactor.

It localises to the golgi apparatus membrane. Its subcellular location is the cytoplasmic vesicle. The protein resides in the secretory vesicle membrane. The enzyme catalyses Hydrolysis of the 21-Trp-|-Val-22 bond in big endothelin to form endothelin 1.. Converts big endothelin-1 to endothelin-1. Also involved in the processing of various neuroendocrine peptides, including neurotensin, angiotensin I, substance P, proenkephalin-derived peptides, and prodynorphin-derived peptides. May play a role in amyloid-beta processing. The polypeptide is Endothelin-converting enzyme 2 (Mus musculus (Mouse)).